The primary structure comprises 368 residues: ATP-dependent (S)-NAD(P)H-hydrate dehydratase (368 aa).

The YjeF C-terminal domain occupies serine 3–leucine 359. (6S)-NADPHX-binding positions include glycine 120 and asparagine 173–arginine 179. Residues lysine 217–aspartate 221 and glycine 236–glycine 245 each bind ATP. Aspartate 246 serves as a coordination point for (6S)-NADPHX.

This sequence belongs to the NnrD/CARKD family. It depends on Mg(2+) as a cofactor.

Its subcellular location is the cytoplasm. It carries out the reaction (6S)-NADHX + ATP = ADP + phosphate + NADH + H(+). The enzyme catalyses (6S)-NADPHX + ATP = ADP + phosphate + NADPH + H(+). Catalyzes the dehydration of the S-form of NAD(P)HX at the expense of ATP, which is converted to ADP. Together with NAD(P)HX epimerase, which catalyzes the epimerization of the S- and R-forms, the enzyme allows the repair of both epimers of NAD(P)HX, a damaged form of NAD(P)H that is a result of enzymatic or heat-dependent hydration. The protein is ATP-dependent (S)-NAD(P)H-hydrate dehydratase of Ajellomyces capsulatus (strain G186AR / H82 / ATCC MYA-2454 / RMSCC 2432) (Darling's disease fungus).